Consider the following 186-residue polypeptide: Myosin light chain 1, skeletal muscle isoform (186 aa).

Met-1 bears the Blocked amino end (Met) mark. Residues 1-26 form a disordered region; that stretch reads MPKAPAKKAEPAPAPAPAPEPAPAPA. Residues 12–26 are compositionally biased toward pro residues; the sequence is APAPAPAPEPAPAPA. EF-hand domains follow at residues 42–77 and 119–154; these read DQIE…LGQN and AGFE…LGEK.

Myosin is a hexamer of 2 heavy chains and 4 light chains.

In Chelon ramada (Thin-lipped grey mullet), this protein is Myosin light chain 1, skeletal muscle isoform.